The following is a 288-amino-acid chain: Methyltransferase ucsB (288 aa).

Residues aspartate 87 and aspartate 121–alanine 122 contribute to the S-adenosyl-L-methionine site.

It belongs to the class I-like SAM-binding methyltransferase superfamily.

Its pathway is mycotoxin biosynthesis. Functionally, methyltransferase; part of the gene cluster that mediates the biosynthesis of UCS1025A, a member of the pyrrolizidinone family that acts as a strong telomerase inhibitor and displays potent antibacterial and antitumor properties. These compounds share a hemiaminal-containing pyrrolizidinone core fused with a gamma-lactone, giving a furopyrrolizidine that is connected to a decalin fragment. The polyketide synthase module (PKS) of the PKS-NRPS ucsA is responsible for the synthesis of the polyketide backbone via the condensation of an acetyl-CoA starter unit with 6 malonyl-CoA units. The downstream nonribosomal peptide synthetase (NRPS) module then amidates the carboxyl end of the polyketide with a 2S,3S-methylproline derived from L-isoleucine by the 2-oxoglutarate-dependent dioxygenase ucsF which converts L-isoleucine to (4S,5S)-4-methylpyrroline-5-carboxylate that is further converted to 2S,3S-methylproline by the pyrroline-5-carboxylate reductase ucsG. Reductive release of the completed aminoacyl polyketide from the assembly line can form the 3-pyrrolin-2-one structure via an intramolecular Knoevenagel reaction. Because ucsA lacks a designated enoylreductase (ER) domain, the required activity is provided the enoyl reductase ucsL. This keto acyclic precursor is the substrate of the Diels-Alderase ucsH, that catalyzes the Diels-Alder cycloaddition. Oxidation of the 3S-methyl group to a carboxylate by the cytochrome P450 monooxygenase ucsK allows an oxa-Michael cyclization that might involve the reductase/dehydrogenase ucsI and which furnishes the furopyrrolizidine. The oxidase ucsJ likely plays a critical role in stereoselective reduction of the C5-C6 double bond to afford the required R-configured carboxylate group. Further enolization and oxidation at C5 by an unidentified enzyme affords the last intermediate that can undergo oxa-Michael cyclization to yield UCS1025A. This is Methyltransferase ucsB from Acremonium sp.